The sequence spans 688 residues: Envelope glycoprotein gp70 (688 aa).

Residues 1-15 show a composition bias toward polar residues; that stretch reads MPNHQSGSPTGSSDL. A disordered region spans residues 1 to 31; it reads MPNHQSGSPTGSSDLLLSGKKQRPHLALRRK. Residues 1 to 98 form the signal peptide; it reads MPNHQSGSPT…SVLGPPPVTG (98 aa). Positions 20–31 are enriched in basic residues; that stretch reads KKQRPHLALRRK. Residues 99–624 lie on the Extracellular side of the membrane; it reads ESYWAYLPKP…ALNPLDWTQY (526 aa). 2 N-linked (GlcNAc...) asparagine; by host glycosylation sites follow: N127 and N143. Residues 426 to 474 are a coiled coil; it reads LLPVDIGDEPWFDDSAIQTFRYATDLIRAKRFVAAIILGISALIAIITS. The propeptide occupies 455 to 456; sequence KR. Positions 457–477 are fusion peptide; that stretch reads FVAAIILGISALIAIITSFAV. Positions 463–481 are immunosuppression; the sequence is LGISALIAIITSFAVATTA. The N-linked (GlcNAc...) asparagine; by host glycan is linked to N498. The stretch at 511–541 forms a coiled coil; it reads LKLEARLNALEEVVLELGQDVANLKTRMSTR. N-linked (GlcNAc...) asparagine; by host glycosylation occurs at N557. Residues 625-645 traverse the membrane as a helical segment; the sequence is FIFIGVGALLLVIVLMIFPIV. At 646–688 the chain is on the cytoplasmic side; that stretch reads FQCLAKSLDQVQSDLNVLLLKKKKGGNAAPAAEMVELPRVSYT.

In terms of assembly, the mature envelope protein (Env) consists of a trimer of SU-TM heterodimers attached by noncovalent interactions or by a labile interchain disulfide bond. Specific enzymatic cleavages in vivo yield mature proteins. Envelope glycoproteins are synthesized as an inactive precursor that is N-glycosylated and processed likely by host cell furin or by a furin-like protease in the Golgi to yield the mature SU and TM proteins. The cleavage site between SU and TM requires the minimal sequence [KR]-X-[KR]-R.

The protein localises to the virion membrane. It localises to the host cell membrane. In terms of biological role, the surface protein (SU) attaches the virus to the host cell by binding to its receptor. This interaction triggers the refolding of the transmembrane protein (TM) and is thought to activate its fusogenic potential by unmasking its fusion peptide. Fusion occurs at the host cell plasma membrane. The transmembrane protein (TM) acts as a class I viral fusion protein. Under the current model, the protein has at least 3 conformational states: pre-fusion native state, pre-hairpin intermediate state, and post-fusion hairpin state. During viral and target cell membrane fusion, the coiled coil regions (heptad repeats) assume a trimer-of-hairpins structure, positioning the fusion peptide in close proximity to the C-terminal region of the ectodomain. The formation of this structure appears to drive apposition and subsequent fusion of viral and target cell membranes. Membranes fusion leads to delivery of the nucleocapsid into the cytoplasm. The chain is Envelope glycoprotein gp70 (env) from Mus musculus (Mouse).